An 897-amino-acid chain; its full sequence is 3'-5' exonuclease DinG (897 aa).

The Exonuclease domain occupies 8 to 161 (VVDLETTGNQ…DEDAATTAKL (154 aa)). The Helicase ATP-binding domain maps to 241–496 (SKAVDQLGLT…KAIDQLEKQR (256 aa)). An ATP-binding site is contributed by 276–283 (ASLGSGKS). The DEAH box signature appears at 448 to 451 (DEAH). The Helicase C-terminal domain maps to 703–893 (NIDEYVASIV…QFGKLLRQIQ (191 aa)).

Belongs to the helicase family. DinG subfamily. Type 2 sub-subfamily. As to quaternary structure, monomer in solution.

With respect to regulation, the nuclease activity is inhibited by ATP or ADP. In terms of biological role, 3'-5' exonuclease acting on single-stranded DNA (ssDNA) and RNA (ssRNA) substrates. Displays ssDNA-stimulated ATPase activity, but lacks helicase activity. The polypeptide is 3'-5' exonuclease DinG (Staphylococcus aureus (strain MRSA252)).